The sequence spans 581 residues: Invertase (581 aa).

Residues 1 to 22 (MFLKYILASGICLVSLLSSTNA) form the signal peptide. Asparagine 37, asparagine 40, asparagine 46, asparagine 57, asparagine 62, and asparagine 79 each carry an N-linked (GlcNAc...) asparagine glycan. Residues 94 to 97 (FMND), glutamine 113, and 158 to 159 (FS) each bind substrate. Aspartate 97 is an active-site residue. N-linked (GlcNAc...) asparagine glycans are attached at residues asparagine 168 and asparagine 175. Residues 227 to 228 (RD) and glutamate 280 each bind substrate. Asparagine 322 is a glycosylation site (N-linked (GlcNAc...) asparagine). Tryptophan 366 contributes to the substrate binding site. Residues asparagine 399, asparagine 409, asparagine 425, asparagine 446, asparagine 452, asparagine 519, and asparagine 569 are each glycosylated (N-linked (GlcNAc...) asparagine).

It belongs to the glycosyl hydrolase 32 family. Post-translationally, glycosylated; contains 67% carbohydrates. This is composed of equimolar amounts of mannose and galactose. There is also a small amount of glucosamine present.

It catalyses the reaction Hydrolysis of terminal non-reducing beta-D-fructofuranoside residues in beta-D-fructofuranosides.. In Schizosaccharomyces pombe (strain 972 / ATCC 24843) (Fission yeast), this protein is Invertase (inv1).